The following is a 51-amino-acid chain: MLSAKGVSLGLGLGLGAWGPVLLGVVGVAGAIALYGYYKNRNAEPAAAEAV.

Topologically, residues 1 to 12 are lumenal; sequence MLSAKGVSLGLG. The LG region stretch occupies residues 9-16; that stretch reads LGLGLGLG. Residues 13–33 form a helical membrane-spanning segment; that stretch reads LGLGAWGPVLLGVVGVAGAIA. Residues 34–51 are Cytoplasmic-facing; it reads LYGYYKNRNAEPAAAEAV.

Belongs to the magnetosome MamD/Mms5 family. Post-translationally, seen in gels as a band of about 5 kDa, with an N-terminus that corresponds to residue 8, suggesting it may undergo N-terminal cleavage.

The protein resides in the magnetosome membrane. Might be involved in magnetite crystal growth. The chain is Magnetosome protein Mms5 from Paramagnetospirillum magneticum (strain ATCC 700264 / AMB-1) (Magnetospirillum magneticum).